We begin with the raw amino-acid sequence, 363 residues long: Large ribosomal subunit protein uL4A (363 aa).

Serine 87 carries the phosphoserine modification. The segment at 280–363 is C-terminal-extended nuclear localization signal; that stretch reads PENIISNADV…EKFLTVLHEN (84 aa).

It belongs to the universal ribosomal protein uL4 family. Component of the large ribosomal subunit (LSU). Mature yeast ribosomes consist of a small (40S) and a large (60S) subunit. The 40S small subunit contains 1 molecule of ribosomal RNA (18S rRNA) and at least 33 different proteins. The large 60S subunit contains 3 rRNA molecules (25S, 5.8S and 5S rRNA) and at least 46 different proteins. uL4 is associated with the polypeptide exit tunnel. uL4 interacts with its chaperone ACL4 and the nuclear import receptor KAP104.

Its subcellular location is the cytoplasm. It is found in the nucleus. Its function is as follows. Component of the ribosome, a large ribonucleoprotein complex responsible for the synthesis of proteins in the cell. The small ribosomal subunit (SSU) binds messenger RNAs (mRNAs) and translates the encoded message by selecting cognate aminoacyl-transfer RNA (tRNA) molecules. The large subunit (LSU) contains the ribosomal catalytic site termed the peptidyl transferase center (PTC), which catalyzes the formation of peptide bonds, thereby polymerizing the amino acids delivered by tRNAs into a polypeptide chain. The nascent polypeptides leave the ribosome through a tunnel in the LSU and interact with protein factors that function in enzymatic processing, targeting, and the membrane insertion of nascent chains at the exit of the ribosomal tunnel. uL4 participates in the regulation of the accumulation of its own mRNA. The chain is Large ribosomal subunit protein uL4A (rpl402) from Schizosaccharomyces pombe (strain 972 / ATCC 24843) (Fission yeast).